Reading from the N-terminus, the 272-residue chain is Formamidopyrimidine-DNA glycosylase (272 aa).

The active-site Schiff-base intermediate with DNA is Pro2. The active-site Proton donor is the Glu3. The active-site Proton donor; for beta-elimination activity is Lys58. DNA is bound by residues His94, Arg112, and Arg153. The segment at 238 to 272 adopts an FPG-type zinc-finger fold; that stretch reads FVYDRAGEPCRVCGAPIRQIVQGQRSTYFCPNCQR. Arg262 acts as the Proton donor; for delta-elimination activity in catalysis.

It belongs to the FPG family. As to quaternary structure, monomer. Requires Zn(2+) as cofactor.

The catalysed reaction is Hydrolysis of DNA containing ring-opened 7-methylguanine residues, releasing 2,6-diamino-4-hydroxy-5-(N-methyl)formamidopyrimidine.. The enzyme catalyses 2'-deoxyribonucleotide-(2'-deoxyribose 5'-phosphate)-2'-deoxyribonucleotide-DNA = a 3'-end 2'-deoxyribonucleotide-(2,3-dehydro-2,3-deoxyribose 5'-phosphate)-DNA + a 5'-end 5'-phospho-2'-deoxyribonucleoside-DNA + H(+). Its function is as follows. Involved in base excision repair of DNA damaged by oxidation or by mutagenic agents. Acts as a DNA glycosylase that recognizes and removes damaged bases. Has a preference for oxidized purines, such as 7,8-dihydro-8-oxoguanine (8-oxoG). Has AP (apurinic/apyrimidinic) lyase activity and introduces nicks in the DNA strand. Cleaves the DNA backbone by beta-delta elimination to generate a single-strand break at the site of the removed base with both 3'- and 5'-phosphates. In Burkholderia mallei (strain NCTC 10229), this protein is Formamidopyrimidine-DNA glycosylase.